A 285-amino-acid chain; its full sequence is GPN-loop GTPase 3 (285 aa).

13–18 (GSGKST) serves as a coordination point for GTP. Residues 72 to 74 (GPN) carry the Gly-Pro-Asn (GPN)-loop; involved in dimer interface motif. 174-177 (TKMD) contacts GTP. The tract at residues 261–285 (KEPKENEEDKSENFDEFFQDRADEP) is disordered. Residues 265 to 277 (ENEEDKSENFDEF) show a composition bias toward acidic residues.

The protein belongs to the GPN-loop GTPase family. Heterodimer with gpn1. Binds to RNA polymerase II (RNAPII).

In terms of biological role, small GTPase required for proper localization of RNA polymerase II (RNAPII). May act at an RNAP assembly step prior to nuclear import. This Xenopus tropicalis (Western clawed frog) protein is GPN-loop GTPase 3.